The following is a 230-amino-acid chain: UPF0173 metal-dependent hydrolase Rsph17029_0942 (230 aa).

Belongs to the UPF0173 family.

The polypeptide is UPF0173 metal-dependent hydrolase Rsph17029_0942 (Cereibacter sphaeroides (strain ATCC 17029 / ATH 2.4.9) (Rhodobacter sphaeroides)).